A 209-amino-acid polypeptide reads, in one-letter code: Small ribosomal subunit protein uS3 (209 aa).

Positions 38 to 107 constitute a KH type-2 domain; the sequence is IRKVIKNKYA…RFIVNVEEIK (70 aa).

It belongs to the universal ribosomal protein uS3 family. As to quaternary structure, part of the 30S ribosomal subunit. Forms a tight complex with proteins S10 and S14.

Binds the lower part of the 30S subunit head. Binds mRNA in the 70S ribosome, positioning it for translation. This chain is Small ribosomal subunit protein uS3, found in Thermosipho africanus (strain TCF52B).